A 461-amino-acid chain; its full sequence is MSPNTWVIEMPTQKTRSHPYPRRISPYRPPVLNRDAFSRDAPPMPARNHDHPVFEDIRTILSVLKASGLMPIYEQVSDYEVGPPTKTNEFYSFFVRGVVHALTIFNVYSLFTPISAQLFFSYRETDNVNQWIELLLCILTYTLTVFVCAHNTTSMLRIMNEILQLDEEVRRQFGANLSQNFGFLVKFLVGITACQAYIIVLKIYAVQGEITPTSYILLAFYGIQNGLTATYIVFASALLRIVYIRFHFINQLLNGYTYGQQHRRKEGGARARRQRGDVNPNVNPALMEHFPEDSLFIYRMHNKLLRIYKGINDCCNLILVSFLGYSFYTVTTNCYNLFVQITGKGMVSPNILQWCFAWLCLHVSLLALLSRSCGLTTTEANATSQILARVYAKSKEYQNIIDKFLTKSIKQEVQFTAYGFFAIDNSTLFKIFSAVTTYLVILIQFKQLEDSKVEDPVPEQT.

Residues 1 to 100 (MSPNTWVIEM…YSFFVRGVVH (100 aa)) are Cytoplasmic-facing. Residues 101–121 (ALTIFNVYSLFTPISAQLFFS) form a helical membrane-spanning segment. At 122–127 (YRETDN) the chain is on the extracellular side. The helical transmembrane segment at 128–148 (VNQWIELLLCILTYTLTVFVC) threads the bilayer. The Cytoplasmic portion of the chain corresponds to 149–180 (AHNTTSMLRIMNEILQLDEEVRRQFGANLSQN). The chain crosses the membrane as a helical span at residues 181-201 (FGFLVKFLVGITACQAYIIVL). The Extracellular portion of the chain corresponds to 202 to 214 (KIYAVQGEITPTS). Residues 215-235 (YILLAFYGIQNGLTATYIVFA) form a helical membrane-spanning segment. Topologically, residues 236–317 (SALLRIVYIR…YKGINDCCNL (82 aa)) are cytoplasmic. The helical transmembrane segment at 318–338 (ILVSFLGYSFYTVTTNCYNLF) threads the bilayer. Topologically, residues 339-348 (VQITGKGMVS) are extracellular. A helical transmembrane segment spans residues 349–369 (PNILQWCFAWLCLHVSLLALL). At 370–414 (SRSCGLTTTEANATSQILARVYAKSKEYQNIIDKFLTKSIKQEVQ) the chain is on the cytoplasmic side. Residues 415–435 (FTAYGFFAIDNSTLFKIFSAV) traverse the membrane as a helical segment. The Extracellular portion of the chain corresponds to 436–461 (TTYLVILIQFKQLEDSKVEDPVPEQT).

The protein belongs to the insect chemoreceptor superfamily. Gustatory receptor (GR) family. Gr21a subfamily. In terms of tissue distribution, expressed in the adult labellar chemosensory neurons. Expressed in tarsal neurons for male-male courtship suppression. In larvae, is expressed in neurons of the terminal external chemosensory organ, and the dorsal and posterior external chemosensory organs.

It localises to the cell membrane. In terms of biological role, gustatory receptor which mediates acceptance or avoidance behavior, depending on its substrates. Required for the response to N,N-Diethyl-meta-toluamide (DEET), the most widely used insect repellent worldwide. Functions as a pheromone receptor for a male inhibitory pheromone and promotes male-male aggression and suppresses male-male courtship. Also promotes preferentially virgin females courting over mated females. This Drosophila melanogaster (Fruit fly) protein is Gustatory and pheromone receptor 32a (Gr32a).